A 251-amino-acid polypeptide reads, in one-letter code: MRILVSNDDGIFSPGIKALGLAMRALGEVFVVAPDMEQSAVGHGITVRRPLRFKHTQSAGFGEIPAYRVDGTPADCVVLGVHLLGRPDLVVSGINLGVNLGLDLTHSGTVAAALEGASLGIPSIAFSLDTSGEVLDFQEAARWALAIARAVGERGLPPGVLLNVNFPASRPKGLLVTRLSTHRFEDQVVERLDPEGKPYYWIAGTPAGEEEEGTDLWAVRRGYVSVTPVSLDLTAHGFLEALSGLLEGVAP.

A divalent metal cation-binding residues include aspartate 8, aspartate 9, serine 39, and asparagine 95.

The protein belongs to the SurE nucleotidase family. Requires a divalent metal cation as cofactor.

Its subcellular location is the cytoplasm. It carries out the reaction a ribonucleoside 5'-phosphate + H2O = a ribonucleoside + phosphate. Functionally, nucleotidase that shows phosphatase activity on nucleoside 5'-monophosphates. The sequence is that of 5'-nucleotidase SurE 1 from Thermus thermophilus (strain ATCC BAA-163 / DSM 7039 / HB27).